A 206-amino-acid polypeptide reads, in one-letter code: Uridine kinase (206 aa).

G9–T16 contacts ATP.

This sequence belongs to the uridine kinase family.

It localises to the cytoplasm. It carries out the reaction uridine + ATP = UMP + ADP + H(+). The enzyme catalyses cytidine + ATP = CMP + ADP + H(+). Its pathway is pyrimidine metabolism; CTP biosynthesis via salvage pathway; CTP from cytidine: step 1/3. It functions in the pathway pyrimidine metabolism; UMP biosynthesis via salvage pathway; UMP from uridine: step 1/1. The sequence is that of Uridine kinase from Borrelia garinii subsp. bavariensis (strain ATCC BAA-2496 / DSM 23469 / PBi) (Borreliella bavariensis).